The following is a 77-amino-acid chain: Putative antitoxin MazE7 (77 aa).

Positions 49-77 are disordered; that stretch reads REASHAETTTQAVRDEDREWEGTVGDGLG.

In terms of assembly, forms a complex with cognate toxin MazF7.

Antitoxin component of a type II toxin-antitoxin (TA) system. The protein is Putative antitoxin MazE7 (mazE7) of Mycobacterium tuberculosis (strain CDC 1551 / Oshkosh).